The primary structure comprises 407 residues: Resuscitation-promoting factor RpfA (407 aa).

Positions 1–33 (MSGRHRKPTTSNVSVAKIAFTGAVLGGGGIAMA) are cleaved as a signal peptide. Disordered regions lie at residues 142 to 253 (VNGE…ADLA) and 271 to 371 (LPAA…AETP). Residues 148–159 (PLAPPPADPAPP) show a composition bias toward pro residues. Residues 160 to 170 (VELAANDLPAP) show a composition bias toward low complexity. A compositionally biased stretch (pro residues) spans 171-193 (LGEPLPAAPADPAPPADLAPPAP). A run of 2 repeats spans residues 178-185 (APADPAPP) and 186-193 (ADLAPPAP). Positions 178–359 (APADPAPPAD…PDPQPADAPP (182 aa)) are 12 X 8 AA approximate repeats of A-P-A-D-L-A-P-P. The segment covering 194-210 (ADVAPPVELAVNDLPAP) has biased composition (low complexity). Residues 211-249 (LGEPLPAAPADPAPPADLAPPAPADLAPPAPADLAPPAP) show a composition bias toward pro residues. 10 repeat units span residues 218-225 (APADPAPP), 226-233 (ADLAPPAP), 240-247 (APADLAPP), 248-255 (APADLAPP), 274-281 (APAELAPP), 287-294 (ASADLAPP), 295-302 (APADLAPP), 303-310 (APAELAPP), 311-318 (APADLAPP), and 353-359 (QPADAPP). The span at 274-292 (APAELAPPADLAPASADLA) shows a compositional bias: low complexity. Pro residues-rich tracts occupy residues 293-312 (PPAP…PPAP) and 350-361 (PDPQPADAPPPG).

Belongs to the transglycosylase family. Rpf subfamily.

Its function is as follows. Factor that stimulates resuscitation of dormant cells. Has peptidoglycan (PG) hydrolytic activity. In Mycobacterium tuberculosis (strain CDC 1551 / Oshkosh), this protein is Resuscitation-promoting factor RpfA (rpfA).